The sequence spans 104 residues: MERPTPRVTKDMLPECSGKTVRIVGKANQVEGETAKVDSNGSFDMHLTVDNTLEPNHFYEFVVSVKPDSSVQLLTCVDFGTDIDMEVYQKLVLFSHKYNSLFFE.

Belongs to the replication factor A protein 3 family. Component of the heterotrimeric canonical replication protein A complex (RPA).

Its subcellular location is the nucleus. Its function is as follows. As part of the replication protein A (RPA/RP-A), a single-stranded DNA-binding heterotrimeric complex, may play an essential role in DNA replication, recombination and repair. Binds and stabilizes single-stranded DNA intermediates, preventing complementary DNA reannealing and recruiting different proteins involved in DNA metabolism. The sequence is that of Replication factor A protein 3 (ssb3) from Schizosaccharomyces pombe (strain 972 / ATCC 24843) (Fission yeast).